The primary structure comprises 82 residues: Cytochrome b559 subunit alpha (82 aa).

The chain crosses the membrane as a helical span at residues Val21 to Trp35. His23 contacts heme.

It belongs to the PsbE/PsbF family. Heterodimer of an alpha subunit and a beta subunit. PSII is composed of 1 copy each of membrane proteins PsbA, PsbB, PsbC, PsbD, PsbE, PsbF, PsbH, PsbI, PsbJ, PsbK, PsbL, PsbM, PsbT, PsbX, PsbY, PsbZ, Psb30/Ycf12, peripheral proteins PsbO, CyanoQ (PsbQ), PsbU, PsbV and a large number of cofactors. It forms dimeric complexes. The cofactor is heme b.

It is found in the cellular thylakoid membrane. This b-type cytochrome is tightly associated with the reaction center of photosystem II (PSII). PSII is a light-driven water:plastoquinone oxidoreductase that uses light energy to abstract electrons from H(2)O, generating O(2) and a proton gradient subsequently used for ATP formation. It consists of a core antenna complex that captures photons, and an electron transfer chain that converts photonic excitation into a charge separation. The polypeptide is Cytochrome b559 subunit alpha (Nostoc punctiforme (strain ATCC 29133 / PCC 73102)).